We begin with the raw amino-acid sequence, 296 residues long: MFKSGFVTIVGRPNVGKSTLLNAIMKEKLSIVSCRPQTTRNNIQTILTEDNYQLVFVDTPGIHKPKHKLGEYMVKSASDAMKDVDLVLFLINPDEKPGRGDLFIIEQLKEVKVPVFLVLNKIDENPQEKVAETLKTYSELMEFQEIIPISALKGKNVDLLKELMFKYIPEGPQYYPEDMIIDQNERFIVAEIVREKALRLLSEEVPHGIAVEILQMKKNEKGTYHIEGNILCEKNSHKPIIIGKGGSKLKKISQYARQDIEAFLQSKVYIRLWVKVKEEWRDNQSLLKELGYKKMK.

In terms of domain architecture, Era-type G spans 3–170 (KSGFVTIVGR…KELMFKYIPE (168 aa)). The segment at 11–18 (GRPNVGKS) is G1. Position 11 to 18 (11 to 18 (GRPNVGKS)) interacts with GTP. Residues 37-41 (QTTRN) are G2. A G3 region spans residues 58-61 (DTPG). Residues 58 to 62 (DTPGI) and 120 to 123 (NKID) each bind GTP. A G4 region spans residues 120–123 (NKID). A G5 region spans residues 149 to 151 (ISA). The 78-residue stretch at 201 to 278 (LSEEVPHGIA…YIRLWVKVKE (78 aa)) folds into the KH type-2 domain.

It belongs to the TRAFAC class TrmE-Era-EngA-EngB-Septin-like GTPase superfamily. Era GTPase family. In terms of assembly, monomer.

It localises to the cytoplasm. The protein resides in the cell membrane. In terms of biological role, an essential GTPase that binds both GDP and GTP, with rapid nucleotide exchange. Plays a role in 16S rRNA processing and 30S ribosomal subunit biogenesis and possibly also in cell cycle regulation and energy metabolism. This chain is GTPase Era, found in Clostridium botulinum (strain Kyoto / Type A2).